The following is a 189-amino-acid chain: Adenylate kinase (189 aa).

Residue 12–17 (GSGKTT) participates in ATP binding. Positions 33–62 (STGDLLRAEVASGSELGKLIDGFISKGNLV) are NMP. AMP is bound by residues Thr-34, Arg-39, 60-62 (NLV), 87-90 (GYPR), and Gln-94. Residues 129-135 (GRARGAD) are LID. Arg-130 is an ATP binding site. AMP contacts are provided by Arg-132 and Arg-144. Arg-172 contributes to the ATP binding site.

Belongs to the adenylate kinase family. Monomer.

It is found in the cytoplasm. It carries out the reaction AMP + ATP = 2 ADP. Its pathway is purine metabolism; AMP biosynthesis via salvage pathway; AMP from ADP: step 1/1. Its function is as follows. Catalyzes the reversible transfer of the terminal phosphate group between ATP and AMP. Plays an important role in cellular energy homeostasis and in adenine nucleotide metabolism. This Campylobacter concisus (strain 13826) protein is Adenylate kinase.